The following is a 172-amino-acid chain: Myosin regulatory light polypeptide 9 (172 aa).

Basic residues predominate over residues 1–16; that stretch reads MSSKRAKAKTTKKRPQ. The segment at 1–20 is disordered; that stretch reads MSSKRAKAKTTKKRPQRATS. Position 2 is an N-acetylserine (serine 2). A Phosphothreonine; by MLCK, CIT and ROCK2 modification is found at threonine 19. A Phosphoserine; by CDC42BP, CIT, MLCK, PAK1, ROCK1, ROCK2, DAPK1, DAPK2 and ZIPK/DAPK3 modification is found at serine 20. 3 EF-hand domains span residues 29–64, 98–133, and 134–169; these read SQIQEFKEAFNMIDQNRDGFIDKEDLHDMLASLGKN, DPEDVIRNAFACFDEEASGFIHEDHLRELLTTMGDR, and FTDEEVDEMYREAPIDKKGNFNYVEFTRILKHGAKD. Residues aspartate 42, asparagine 44, aspartate 46, and aspartate 53 each contribute to the Ca(2+) site.

As to quaternary structure, myosin is a hexamer of 2 heavy chains and 4 light chains: interacts with myosin heavy chain MYO19. Interacts with LUZP1; the interaction results in inhibition of phosphorylation of MYL9 by DAPK3. Post-translationally, phosphorylation increases the actin-activated myosin ATPase activity and thereby regulates the contractile activity. It is required to generate the driving force in the migration of the cells but not necessary for localization of myosin-2 at the leading edge. Phosphorylation is required for myotube formation. Phosphorylated by DAPK3; DAPK3-mediated phosphorylation is inhibited by LUZP1.

It is found in the cytoplasm. The protein resides in the cytoskeleton. The protein localises to the cell cortex. Functionally, myosin regulatory subunit that plays an important role in regulation of both smooth muscle and nonmuscle cell contractile activity via its phosphorylation. Implicated in cytokinesis, receptor capping, and cell locomotion. In myoblasts, regulates PIEZO1-dependent cortical actomyosin assembly involved in myotube formation. The sequence is that of Myosin regulatory light polypeptide 9 (Myl9) from Mus musculus (Mouse).